The primary structure comprises 126 residues: UPF0102 protein DNO_0639 (126 aa).

It belongs to the UPF0102 family.

The protein is UPF0102 protein DNO_0639 of Dichelobacter nodosus (strain VCS1703A).